Here is a 172-residue protein sequence, read N- to C-terminus: Shikimate kinase (172 aa).

Residue 11–16 (GSGKTT) coordinates ATP. T15 lines the Mg(2+) pocket. Positions 33, 57, and 79 each coordinate substrate. R117 serves as a coordination point for ATP. R136 is a binding site for substrate.

This sequence belongs to the shikimate kinase family. As to quaternary structure, monomer. It depends on Mg(2+) as a cofactor.

The protein localises to the cytoplasm. The catalysed reaction is shikimate + ATP = 3-phosphoshikimate + ADP + H(+). It functions in the pathway metabolic intermediate biosynthesis; chorismate biosynthesis; chorismate from D-erythrose 4-phosphate and phosphoenolpyruvate: step 5/7. Catalyzes the specific phosphorylation of the 3-hydroxyl group of shikimic acid using ATP as a cosubstrate. This chain is Shikimate kinase, found in Caldicellulosiruptor saccharolyticus (strain ATCC 43494 / DSM 8903 / Tp8T 6331).